The sequence spans 126 residues: Fluoride-specific ion channel FluC (126 aa).

The next 4 membrane-spanning stretches (helical) occupy residues 3-23, 37-57, 68-88, and 101-121; these read PYLL…RFLI, VGTL…ALYF, LVIT…LETV, and TNIT…MMLF. Na(+) contacts are provided by G75 and T78.

The protein belongs to the fluoride channel Fluc/FEX (TC 1.A.43) family.

It localises to the cell inner membrane. It carries out the reaction fluoride(in) = fluoride(out). Na(+) is not transported, but it plays an essential structural role and its presence is essential for fluoride channel function. In terms of biological role, fluoride-specific ion channel. Important for reducing fluoride concentration in the cell, thus reducing its toxicity. This is Fluoride-specific ion channel FluC from Sulfurovum sp. (strain NBC37-1).